Reading from the N-terminus, the 2290-residue chain is Armadillo repeat-containing X-linked protein 4 (2290 aa).

A helical membrane pass occupies residues 7–24 (VGWVTAGLVIWAGTCYYI). 8 disordered regions span residues 517–549 (QGEA…TCTQ), 564–583 (SRVD…TKAD), 967–988 (KVRG…VGSA), 1014–1087 (AVPK…ACRK), 1302–1430 (GSWA…ANSG), 1521–1715 (GSWG…RSED), 1911–1931 (SNTF…AGDN), and 1954–1973 (NENT…KSSE). A compositionally biased stretch (basic residues) spans 526–536 (GKARGKAKAKC). The span at 1073 to 1087 (TSESEGGSGTQACRK) shows a compositional bias: polar residues. Composition is skewed to gly residues over residues 1328 to 1341 (SWAG…GGSM) and 1403 to 1414 (AGAGGQAGGGSK). The span at 1419–1430 (DQSSGRSWANSG) shows a compositional bias: polar residues. Gly residues predominate over residues 1521-1535 (GSWGGASGQDVGGSR). Over residues 1537–1558 (GPTNQSSAGSWDSPGSQVSGSC) the composition is skewed to polar residues. 2 stretches are compositionally biased toward gly residues: residues 1581–1598 (IGGG…GGSR) and 1609–1623 (GSWG…GGAR). A compositionally biased stretch (polar residues) spans 1628–1645 (DQSSGGSWAGTGNQSSGR). The span at 1674–1687 (GAGSQASGESWAGS) shows a compositional bias: low complexity. ARM repeat units lie at residues 2031-2071 (RCKH…NSAD), 2073-2112 (SYSH…NISV), 2153-2192 (ITSE…NFSK), and 2194-2234 (PSMT…NINY).

It belongs to the eutherian X-chromosome-specific Armcx family.

The protein localises to the membrane. This chain is Armadillo repeat-containing X-linked protein 4 (ARMCX4), found in Homo sapiens (Human).